The sequence spans 389 residues: GDP-fucose protein O-fucosyltransferase 1 (389 aa).

A signal peptide spans 1 to 21 (MRVSKVLTLASFISVCSYSEA). Residue Asn-24 is glycosylated (N-linked (GlcNAc...) asparagine). Residues Cys-35 and Cys-37 are joined by a disulfide bond. Residue 40–43 (RFGN) coordinates substrate. An intrachain disulfide couples Cys-119 to Cys-135. 238-240 (HLR) contributes to the substrate binding site. 2 cysteine pairs are disulfide-bonded: Cys-249–Cys-281 and Cys-266–Cys-353. 356–357 (TF) provides a ligand contact to substrate.

Belongs to the glycosyltransferase 65 family. Monomer.

It localises to the endoplasmic reticulum. The catalysed reaction is L-seryl-[protein] + GDP-beta-L-fucose = 3-O-(alpha-L-fucosyl)-L-seryl-[protein] + GDP + H(+). It catalyses the reaction L-threonyl-[protein] + GDP-beta-L-fucose = 3-O-(alpha-L-fucosyl)-L-threonyl-[protein] + GDP + H(+). Its pathway is protein modification; protein glycosylation. Catalyzes the reaction that attaches fucose through an O-glycosidic linkage to a conserved serine or threonine residue found in the consensus sequence C2-X(4,5)-[S/T]-C3 of EGF domains, where C2 and C3 are the second and third conserved cysteines. Specifically uses GDP-fucose as donor substrate and proper disulfide pairing of the substrate EGF domains is required for fucose transfer. The sequence is that of GDP-fucose protein O-fucosyltransferase 1 from Caenorhabditis elegans.